The sequence spans 407 residues: Argininosuccinate synthase (407 aa).

ATP is bound by residues 13–21 (AYSGGLDTS) and Ala40. L-citrulline is bound by residues Tyr91 and Ser96. Position 121 (Gly121) interacts with ATP. The L-aspartate site is built by Thr123, Asn127, and Asp128. Residue Asn127 coordinates L-citrulline. 5 residues coordinate L-citrulline: Arg131, Ser182, Ser191, Glu267, and Tyr279.

It belongs to the argininosuccinate synthase family. Type 1 subfamily. In terms of assembly, homotetramer.

The protein localises to the cytoplasm. It catalyses the reaction L-citrulline + L-aspartate + ATP = 2-(N(omega)-L-arginino)succinate + AMP + diphosphate + H(+). Its pathway is amino-acid biosynthesis; L-arginine biosynthesis; L-arginine from L-ornithine and carbamoyl phosphate: step 2/3. This chain is Argininosuccinate synthase, found in Rhizobium etli (strain ATCC 51251 / DSM 11541 / JCM 21823 / NBRC 15573 / CFN 42).